Consider the following 535-residue polypeptide: INSYN2B protein (535 aa).

Disordered stretches follow at residues 23 to 85 (LVKQ…SFPR), 215 to 346 (EARE…RSSS), and 360 to 387 (KLPS…PRQE). Residues 46–59 (KNPTGVTEVNTQTP) are compositionally biased toward polar residues. The span at 219 to 232 (SALSPESSAEESNS) shows a compositional bias: low complexity. Polar residues-rich tracts occupy residues 258–269 (CSNTNSSASNMP), 307–319 (RTHS…SRSQ), and 361–375 (LPSQ…TGVG). Residues 411 to 448 (DLQGRLQSVEESLHSNQEKIKVLLNVIQDLEKAHALTE) adopt a coiled-coil conformation. Positions 493 to 528 (LEEAEPTEEAPSPPKSPAEAPVPEKQDLRRKSKKVK) are disordered.

Belongs to the INSYN2 family.

This Mus musculus (Mouse) protein is INSYN2B protein (Insyn2b).